The following is a 716-amino-acid chain: Hepatocyte growth factor-like protein (716 aa).

The signal sequence occupies residues 1–18 (MGWLPLLLLLVQCSRALG). The 87-residue stretch at 19–105 (QRSPLNDFQL…SLCHLFQKKD (87 aa)) folds into the PAN domain. 20 cysteine pairs are disulfide-bonded: cysteine 56/cysteine 78, cysteine 60/cysteine 66, cysteine 110/cysteine 186, cysteine 131/cysteine 169, cysteine 157/cysteine 181, cysteine 191/cysteine 268, cysteine 194/cysteine 333, cysteine 212/cysteine 251, cysteine 240/cysteine 263, cysteine 292/cysteine 370, cysteine 313/cysteine 352, cysteine 341/cysteine 364, cysteine 379/cysteine 457, cysteine 400/cysteine 440, cysteine 428/cysteine 452, cysteine 477/cysteine 593, cysteine 512/cysteine 528, cysteine 607/cysteine 672, cysteine 637/cysteine 651, and cysteine 662/cysteine 690. N-linked (GlcNAc...) asparagine glycosylation occurs at asparagine 72. Kringle domains follow at residues 110–186 (CIMD…IKTC), 191–268 (CVLC…LPSC), 292–370 (CFRG…IPRC), and 379–457 (CYHG…LQRC). An N-linked (GlcNAc...) asparagine glycan is attached at asparagine 173. Asparagine 305 carries an N-linked (GlcNAc...) asparagine glycan. The region spanning 489–714 (VVGGHPGNSP…FVDWINKVMQ (226 aa)) is the Peptidase S1 domain. The N-linked (GlcNAc...) asparagine glycan is linked to asparagine 620.

It belongs to the peptidase S1 family. Plasminogen subfamily. Dimer of an alpha chain and a beta chain linked by a disulfide bond. Interacts (via beta chain) with MST1R (via SEMA domain). Post-translationally, cleaved after Arg-488, probably by HPN/Hepsin, to yield the active form consisting of two disulfide-linked chains. As to expression, liver. Lower levels in lung, placenta and adrenal.

The protein resides in the secreted. The polypeptide is Hepatocyte growth factor-like protein (Mst1) (Mus musculus (Mouse)).